A 124-amino-acid chain; its full sequence is Fluoride-specific ion channel FluC (124 aa).

A run of 4 helical transmembrane segments spans residues 4 to 24 (VLYIAVFGALGCLSRYYLSGW), 32 to 52 (AFPYGTFAVNIVGAFCIGLIM), 67 to 87 (IGLTIGFLGGLTTFSTFSYET), and 101 to 121 (ANVLFSVMTCLVFTWLGIIVA). Na(+) is bound by residues Gly75 and Thr78.

It belongs to the fluoride channel Fluc/FEX (TC 1.A.43) family.

Its subcellular location is the cell inner membrane. The enzyme catalyses fluoride(in) = fluoride(out). With respect to regulation, na(+) is not transported, but it plays an essential structural role and its presence is essential for fluoride channel function. Its function is as follows. Fluoride-specific ion channel. Important for reducing fluoride concentration in the cell, thus reducing its toxicity. The polypeptide is Fluoride-specific ion channel FluC (Geotalea uraniireducens (strain Rf4) (Geobacter uraniireducens)).